We begin with the raw amino-acid sequence, 265 residues long: Translation initiation factor 2 subunit alpha (265 aa).

Positions 12–83 constitute an S1 motif domain; sequence GELIIGTVYK…KKGHVDASLK (72 aa).

Belongs to the eIF-2-alpha family. Heterotrimer composed of an alpha, a beta and a gamma chain.

Functionally, eIF-2 functions in the early steps of protein synthesis by forming a ternary complex with GTP and initiator tRNA. The polypeptide is Translation initiation factor 2 subunit alpha (Methanobrevibacter smithii (strain ATCC 35061 / DSM 861 / OCM 144 / PS)).